The sequence spans 137 residues: MSDRLSQLQEAVDQLMEQFIATYFYIDRHHDLKTFSPKDTIAPSKADQPPEVDTLPPDVFQAGQLELARDLITREQQIEYLISSLPGLDNSEQDQLQSIKELEEELNVAEKQRQEAVKEKDEVLVKLDQTLRSIRRY.

The segment at Pro-37 to Pro-56 is disordered. The stretch at Gly-87–Thr-130 forms a coiled coil.

This sequence belongs to the Mediator complex subunit 21 family. Component of the Mediator complex.

The protein resides in the nucleus. Functionally, component of the Mediator complex, a coactivator involved in the regulated transcription of nearly all RNA polymerase II-dependent genes. Mediator functions as a bridge to convey information from gene-specific regulatory proteins to the basal RNA polymerase II transcription machinery. Mediator is recruited to promoters by direct interactions with regulatory proteins and serves as a scaffold for the assembly of a functional preinitiation complex with RNA polymerase II and the general transcription factors. This is Mediator of RNA polymerase II transcription subunit 21 (srb-7) from Neurospora crassa (strain ATCC 24698 / 74-OR23-1A / CBS 708.71 / DSM 1257 / FGSC 987).